A 445-amino-acid polypeptide reads, in one-letter code: Exodeoxyribonuclease 7 large subunit (445 aa).

This sequence belongs to the XseA family. As to quaternary structure, heterooligomer composed of large and small subunits.

The protein resides in the cytoplasm. The enzyme catalyses Exonucleolytic cleavage in either 5'- to 3'- or 3'- to 5'-direction to yield nucleoside 5'-phosphates.. Its function is as follows. Bidirectionally degrades single-stranded DNA into large acid-insoluble oligonucleotides, which are then degraded further into small acid-soluble oligonucleotides. This is Exodeoxyribonuclease 7 large subunit from Limosilactobacillus reuteri (strain DSM 20016) (Lactobacillus reuteri).